The primary structure comprises 315 residues: Cyclin-dependent kinase B2-2 (315 aa).

The region spanning 16 to 306 (FEKLEKVGEG…AKKAMEHPYF (291 aa)) is the Protein kinase domain. ATP is bound by residues 22–30 (VGEGTYGKV) and lysine 45. Tyrosine 27 carries the phosphotyrosine modification. The active-site Proton acceptor is aspartate 147. Threonine 181 carries the post-translational modification Phosphothreonine.

This sequence belongs to the protein kinase superfamily. CMGC Ser/Thr protein kinase family. CDC2/CDKX subfamily. Expressed in flowers.

The catalysed reaction is L-seryl-[protein] + ATP = O-phospho-L-seryl-[protein] + ADP + H(+). The enzyme catalyses L-threonyl-[protein] + ATP = O-phospho-L-threonyl-[protein] + ADP + H(+). It carries out the reaction [DNA-directed RNA polymerase] + ATP = phospho-[DNA-directed RNA polymerase] + ADP + H(+). This is Cyclin-dependent kinase B2-2 (CDKB2-2) from Arabidopsis thaliana (Mouse-ear cress).